Reading from the N-terminus, the 512-residue chain is Lysine--tRNA ligase (512 aa).

Mg(2+)-binding residues include glutamate 408 and glutamate 415.

This sequence belongs to the class-II aminoacyl-tRNA synthetase family. Homodimer. Mg(2+) is required as a cofactor.

It localises to the cytoplasm. The enzyme catalyses tRNA(Lys) + L-lysine + ATP = L-lysyl-tRNA(Lys) + AMP + diphosphate. This chain is Lysine--tRNA ligase, found in Prochlorococcus marinus (strain MIT 9301).